The primary structure comprises 311 residues: tRNA-cytidine(32) 2-sulfurtransferase (311 aa).

Residues 47–52 (SGGKDS) carry the PP-loop motif motif. Residues C122, C125, and C213 each coordinate [4Fe-4S] cluster.

This sequence belongs to the TtcA family. Homodimer. It depends on Mg(2+) as a cofactor. [4Fe-4S] cluster is required as a cofactor.

Its subcellular location is the cytoplasm. The catalysed reaction is cytidine(32) in tRNA + S-sulfanyl-L-cysteinyl-[cysteine desulfurase] + AH2 + ATP = 2-thiocytidine(32) in tRNA + L-cysteinyl-[cysteine desulfurase] + A + AMP + diphosphate + H(+). It participates in tRNA modification. In terms of biological role, catalyzes the ATP-dependent 2-thiolation of cytidine in position 32 of tRNA, to form 2-thiocytidine (s(2)C32). The sulfur atoms are provided by the cysteine/cysteine desulfurase (IscS) system. This Escherichia coli O157:H7 protein is tRNA-cytidine(32) 2-sulfurtransferase.